The following is an 840-amino-acid chain: Exocyst complex component 7 (840 aa).

Residues 1-112 (MSAPPRLSAR…ATSTTSPFSY (112 aa)) are disordered. The span at 19 to 31 (SNAPSPTSPTGLK) shows a compositional bias: polar residues. Composition is skewed to low complexity over residues 50 to 73 (KSSV…TLPK) and 83 to 111 (QQQQ…SPFS). A coiled-coil region spans residues 193-227 (KNNATSELTEQDDQLENDKRDLQFIKEQLEKNNSM). The disordered stretch occupies residues 601-638 (QDNNNSNSNSNAPSSTSSNSKSSSSSSSSSSSNSASST). The segment covering 603-637 (NNNSNSNSNAPSSTSSNSKSSSSSSSSSSSNSASS) has biased composition (low complexity).

The protein belongs to the EXO70 family. In terms of assembly, the exocyst complex is composed of sec3/exoc1, sec5/exoc2, sec6/exoc3, sec8/exoc4, sec10/exoc5, sec15/exoc6, exo70/exoc7 and exo84/exoc8.

The protein resides in the cytoplasm. The protein localises to the cytosol. It is found in the cell membrane. Its subcellular location is the midbody. It localises to the midbody ring. Its function is as follows. Component of the exocyst complex involved in the docking of exocytic vesicles with fusion sites on the plasma membrane. The protein is Exocyst complex component 7 (exoc7) of Dictyostelium discoideum (Social amoeba).